A 282-amino-acid polypeptide reads, in one-letter code: Hepatitis A virus cellular receptor 2 homolog (282 aa).

Positions 1–21 are cleaved as a signal peptide; it reads MFSWLPFSCALLLLQPLPARS. The region spanning 22–131 is the Ig-like V-type domain; that stretch reads LENAYTAEVG…EKLELKLSIT (110 aa). Residues 22-194 lie on the Extracellular side of the membrane; the sequence is LENAYTAEVG…KDSGETIRTA (173 aa). 3 cysteine pairs are disulfide-bonded: C38–C111, C52–C63, and C58–C110. Q62 contributes to the a 1,2-diacyl-sn-glycero-3-phospho-L-serine binding site. N74 and N100 each carry an N-linked (GlcNAc...) asparagine glycan. R112 contacts a 1,2-diacyl-sn-glycero-3-phospho-L-serine. Ca(2+) contacts are provided by F115 and G117. M119 is an a 1,2-diacyl-sn-glycero-3-phospho-L-serine binding site. N120 provides a ligand contact to Ca(2+). The disordered stretch occupies residues 138–163; that stretch reads PAGTAHGDSTTASPRTLTTEGSGSET. A compositionally biased stretch (polar residues) spans 144-163; sequence GDSTTASPRTLTTEGSGSET. O-linked (GalNAc...) threonine glycosylation is present at T147. Residue N173 is glycosylated (N-linked (GlcNAc...) asparagine). A helical membrane pass occupies residues 195–215; the sequence is VHIGVGVSAGLALALILGVLI. The Cytoplasmic portion of the chain corresponds to 216–282; the sequence is LKWYSSKKKK…YCYVSSQQPS (67 aa). An interaction with BAG6 region spans residues 253–271; sequence EENIYTIEENIYEMENSNE. The residue at position 257 (Y257) is a Phosphotyrosine; by ITK.

This sequence belongs to the immunoglobulin superfamily. TIM family. In terms of assembly, interacts with HMGB1; impairs HMGB1 binding to B-DNA and likely HMGB1-mediated innate immune response. Interacts with BAG6. Interacts (phosphorylated) with PIK3R1 and PIK3R2. Interacts (not dependent on its phosphorylation status) with FYN. Interacts (in basal state T-cells) with VAV1; AKT1/2, LCP2, ZAP70, SYK, PIK3R1, FYN, SH3BP2 and SH2D2A. Interacts (in activated T-cells) with LCK and PLCG. Interacts with ILF3; this interaction promotes ILF3 ubiquitination and degradation.

Its subcellular location is the membrane. It localises to the cell junction. Cell surface receptor implicated in modulating innate and adaptive immune responses. Generally accepted to have an inhibiting function. Reports on stimulating functions suggest that the activity may be influenced by the cellular context and/or the respective ligand. Regulates macrophage activation. Inhibits T-helper type 1 lymphocyte (Th1)-mediated auto- and alloimmune responses and promotes immunological tolerance. In CD8+ cells attenuates TCR-induced signaling, specifically by blocking NF-kappaB and NFAT promoter activities resulting in the loss of IL-2 secretion. The function may implicate its association with LCK proposed to impair phosphorylation of TCR subunits. In contrast, shown to activate TCR-induced signaling in T-cells probably implicating ZAP70, LCP2, LCK and FYN. Expressed on Treg cells can inhibit Th17 cell responses. Receptor for LGALS9. Binding to LGALS9 is believed to result in suppression of T-cell responses; the resulting apoptosis of antigen-specific cells may implicate HAVCR2 phosphorylation and disruption of its association with BAG6. Binding to LGALS9 is proposed to be involved in innate immune response to intracellular pathogens. Expressed on Th1 cells interacts with LGALS9 expressed on Mycobacterium tuberculosis-infected macrophages to stimulate antibactericidal activity including IL-1 beta secretion and to restrict intracellular bacterial growth. However, the function as receptor for LGALS9 has been challenged. Also reported to enhance CD8+ T cell responses to an acute infection such as by Listeria monocytogenes. Receptor for phosphatidylserine (PtSer); PtSer-binding is calcium-dependent. May recognize PtSer on apoptotic cells leading to their phagocytosis. Mediates the engulfment of apoptotic cells by dendritic cells. Expressed on T-cells, promotes conjugation but not engulfment of apoptotic cells. Expressed on dendritic cells (DCs) positively regulates innate immune response and in synergy with Toll-like receptors promotes secretion of TNF-alpha. In tumor-imfiltrating DCs suppresses nucleic acid-mediated innate immune repsonse by interaction with HMGB1 and interfering with nucleic acid-sensing and trafficking of nucleid acids to endosomes. Can enhance mast cell production of Th2 cytokines Il-4, IL-6 and IL-13. Expressed on natural killer (NK) cells acts as a coreceptor to enhance IFN-gamma production in response to LGALS9. In contrast, shown to suppress NK cell-mediated cytotoxicity. Negatively regulates NK cell function in LPS-induced endotoxic shock. The chain is Hepatitis A virus cellular receptor 2 homolog (Havcr2) from Rattus norvegicus (Rat).